Consider the following 340-residue polypeptide: Branched-chain-amino-acid aminotransferase (340 aa).

Position 187 is an N6-(pyridoxal phosphate)lysine (Lys187).

The protein belongs to the class-IV pyridoxal-phosphate-dependent aminotransferase family. Pyridoxal 5'-phosphate serves as cofactor.

It catalyses the reaction L-leucine + 2-oxoglutarate = 4-methyl-2-oxopentanoate + L-glutamate. The enzyme catalyses L-isoleucine + 2-oxoglutarate = (S)-3-methyl-2-oxopentanoate + L-glutamate. The catalysed reaction is L-valine + 2-oxoglutarate = 3-methyl-2-oxobutanoate + L-glutamate. Its pathway is amino-acid biosynthesis; L-isoleucine biosynthesis; L-isoleucine from 2-oxobutanoate: step 4/4. It participates in amino-acid biosynthesis; L-leucine biosynthesis; L-leucine from 3-methyl-2-oxobutanoate: step 4/4. The protein operates within amino-acid biosynthesis; L-valine biosynthesis; L-valine from pyruvate: step 4/4. In terms of biological role, acts on leucine, isoleucine and valine. The protein is Branched-chain-amino-acid aminotransferase (ilvE) of Helicobacter pylori (strain J99 / ATCC 700824) (Campylobacter pylori J99).